The primary structure comprises 291 residues: Undecaprenyl-diphosphatase (291 aa).

8 helical membrane-spanning segments follow: residues 1 to 21, 48 to 68, 100 to 120, 124 to 144, 160 to 180, 201 to 221, 230 to 250, and 270 to 290; these read MIIIEFIKGLILGIVEGLTEF, SAFTFKVVIQLGSVFAAAWVF, LHVLVGMIPAGILGVLFDDFI, LFSVPTVMIGLFLGAIYMIIA, INYVQAFVIGISQAVAMWPGF, SDFTFIMAVPIMLAASALSLV, AHIPFYLIGFLAAFIVGLIAI, and IVLVIIIAILYFGFGIGQGIS.

Belongs to the UppP family.

The protein resides in the cell membrane. It catalyses the reaction di-trans,octa-cis-undecaprenyl diphosphate + H2O = di-trans,octa-cis-undecaprenyl phosphate + phosphate + H(+). Its function is as follows. Catalyzes the dephosphorylation of undecaprenyl diphosphate (UPP). Confers resistance to bacitracin. The protein is Undecaprenyl-diphosphatase of Staphylococcus haemolyticus (strain JCSC1435).